A 155-amino-acid chain; its full sequence is Zinc finger HIT domain-containing protein 3 (155 aa).

8 residues coordinate Zn(2+): cysteine 11, cysteine 14, cysteine 22, cysteine 25, cysteine 30, cysteine 34, histidine 38, and cysteine 42. The HIT-type zinc-finger motif lies at 11–42 (CVICLEKPKYRCPACRVPYCSVVCFRKHKEQC). A Phosphoserine modification is found at serine 80.

Thyroid receptor interacting proteins (TRIPs) specifically interact with the ligand binding domain of the thyroid receptor (TR). Requires the presence of thyroid hormone for its interaction. Interacts with NUFIP1. Interacts (via HIT-type zinc finger) with the RUVBL1/RUVBL2 complex in the presence of ADP.

It localises to the cytoplasm. It is found in the nucleus. The chain is Zinc finger HIT domain-containing protein 3 (ZNHIT3) from Homo sapiens (Human).